The following is a 363-amino-acid chain: Protein-arginine kinase (363 aa).

One can recognise a Phosphagen kinase C-terminal domain in the interval 24-255 (IVLSSRIRLA…EQLIAQERAA (232 aa)). Residues 27–31 (SSRIR), His-92, Arg-126, 177–181 (RASVM), and 208–213 (RGTYGE) each bind ATP. An RDXXRA motif of the pArg binding pocket involved in allosteric regulation motif is present at residues 338–343 (RDVRRA).

The protein belongs to the ATP:guanido phosphotransferase family. In terms of assembly, homodimer. Dimerization is important for full catalytic activity.

The enzyme catalyses L-arginyl-[protein] + ATP = N(omega)-phospho-L-arginyl-[protein] + ADP + H(+). Its activity is regulated as follows. Appears to be allosterically activated by the binding of pArg-containing polypeptides to the pArg-binding pocket localized in the C-terminal domain of McsB. In terms of biological role, catalyzes the specific phosphorylation of arginine residues in a large number of proteins. Is part of the bacterial stress response system, where it is involved in regulating the global heat shock repressor CtsR; phosphorylates arginine residues in the winged helix-turn-helix domain of CtsR, thereby preventing its binding to DNA and consequently inducing the expression of repressed genes. Protein arginine phosphorylation has a physiologically important role and is involved in the regulation of many critical cellular processes, such as protein homeostasis, motility, competence, and stringent and stress responses, by regulating gene expression and protein activity. Acts exclusively on Arg residues, since it cannot phosphorylate Tyr, Ser, Thr, His, Asp and Lys. Has no free arginine kinase activity. This Geobacillus stearothermophilus (Bacillus stearothermophilus) protein is Protein-arginine kinase.